We begin with the raw amino-acid sequence, 462 residues long: tRNA modification GTPase MnmE (462 aa).

(6S)-5-formyl-5,6,7,8-tetrahydrofolate is bound by residues R23, E86, and K125. The TrmE-type G domain occupies 221–384 (GIPVAIVGEP…LKNQLLSFVN (164 aa)). N231 provides a ligand contact to K(+). Residues 231-236 (NVGKST), 250-256 (SEIAGTT), and 275-278 (DTAG) contribute to the GTP site. S235 is a Mg(2+) binding site. K(+) contacts are provided by S250, I252, and T255. Mg(2+) is bound at residue T256. K462 is a binding site for (6S)-5-formyl-5,6,7,8-tetrahydrofolate.

This sequence belongs to the TRAFAC class TrmE-Era-EngA-EngB-Septin-like GTPase superfamily. TrmE GTPase family. In terms of assembly, homodimer. Heterotetramer of two MnmE and two MnmG subunits. The cofactor is K(+).

The protein resides in the cytoplasm. Functionally, exhibits a very high intrinsic GTPase hydrolysis rate. Involved in the addition of a carboxymethylaminomethyl (cmnm) group at the wobble position (U34) of certain tRNAs, forming tRNA-cmnm(5)s(2)U34. The protein is tRNA modification GTPase MnmE of Flavobacterium psychrophilum (strain ATCC 49511 / DSM 21280 / CIP 103535 / JIP02/86).